Reading from the N-terminus, the 697-residue chain is Polyribonucleotide nucleotidyltransferase (697 aa).

Asp490 and Asp496 together coordinate Mg(2+). The 60-residue stretch at 557–616 folds into the KH domain; sequence PKVVTMTIKPEKIRDVIGPGGKKINEIIDETGVKLDIEQDGTIFIGAVDKDAIARARSII. The S1 motif domain occupies 626 to 694; sequence GQVYEGKVKR…KQGRVNASHK (69 aa).

Belongs to the polyribonucleotide nucleotidyltransferase family. The cofactor is Mg(2+).

The protein resides in the cytoplasm. The enzyme catalyses RNA(n+1) + phosphate = RNA(n) + a ribonucleoside 5'-diphosphate. Functionally, involved in mRNA degradation. Catalyzes the phosphorolysis of single-stranded polyribonucleotides processively in the 3'- to 5'-direction. This chain is Polyribonucleotide nucleotidyltransferase, found in Staphylococcus saprophyticus subsp. saprophyticus (strain ATCC 15305 / DSM 20229 / NCIMB 8711 / NCTC 7292 / S-41).